A 407-amino-acid chain; its full sequence is Serine hydroxymethyltransferase (407 aa).

Pyridoxal 5'-phosphate is bound by residues Y51 and 94-95 (GS). Residues L117 and 121–123 (GHL) each bind (6S)-5,6,7,8-tetrahydrofolate. Pyridoxal 5'-phosphate contacts are provided by S172, H200, and H225. An N6-(pyridoxal phosphate)lysine modification is found at K226. E242 serves as a coordination point for (6S)-5,6,7,8-tetrahydrofolate. Pyridoxal 5'-phosphate is bound at residue G258.

It belongs to the SHMT family. Homodimer. It depends on pyridoxal 5'-phosphate as a cofactor.

It localises to the cytoplasm. The catalysed reaction is (6R)-5,10-methylene-5,6,7,8-tetrahydrofolate + glycine + H2O = (6S)-5,6,7,8-tetrahydrofolate + L-serine. It functions in the pathway one-carbon metabolism; tetrahydrofolate interconversion. The protein operates within amino-acid biosynthesis; glycine biosynthesis; glycine from L-serine: step 1/1. Functionally, catalyzes the reversible interconversion of serine and glycine with tetrahydrofolate (THF) serving as the one-carbon carrier. This reaction serves as the major source of one-carbon groups required for the biosynthesis of purines, thymidylate, methionine, and other important biomolecules. Also exhibits THF-independent aldolase activity toward beta-hydroxyamino acids, producing glycine and aldehydes, via a retro-aldol mechanism. In Thermus thermophilus (strain ATCC 27634 / DSM 579 / HB8), this protein is Serine hydroxymethyltransferase.